A 202-amino-acid chain; its full sequence is Secreted RxLR effector protein 93 (202 aa).

The N-terminal stretch at 1–16 (MRFYLTKLFAAAGALA) is a signal peptide. The interval 29–58 (TPVSPLSRSSDHHQSDDSTQRRLRTLNGAD) is disordered. Positions 37 to 48 (SSDHHQSDDSTQ) are enriched in basic and acidic residues. Positions 49–61 (RRLRTLNGADEER) match the RxLR-dEER motif.

Belongs to the RxLR effector family.

The protein localises to the secreted. It is found in the host nucleus. In terms of biological role, secreted effector that completely suppresses the host cell death induced by cell death-inducing proteins. The chain is Secreted RxLR effector protein 93 from Plasmopara viticola (Downy mildew of grapevine).